The sequence spans 355 residues: Green-sensitive opsin (355 aa).

The Extracellular portion of the chain corresponds to 1-36 (MNGTEGINFYVPMSNKTGVVRSPFEYPQYYLAEPWK). Asn2 and Asn15 each carry an N-linked (GlcNAc...) asparagine glycan. A helical transmembrane segment spans residues 37 to 61 (YRLVCCYIFFLISTGLPINLLTLLV). Topologically, residues 62–73 (TFKHKKLRQPLN) are cytoplasmic. Residues 74–99 (YILVNLAVADLFMACFGFTVTFYTAW) traverse the membrane as a helical segment. Residues 100–113 (NGYFVFGPVGCAVE) are Extracellular-facing. A disulfide bond links Cys110 and Cys187. A helical transmembrane segment spans residues 114 to 133 (GFFATLGGQVALWSLVVLAI). Residues 134 to 152 (ERYIVVCKPMGNFRFSATH) are Cytoplasmic-facing. The helical transmembrane segment at 153 to 176 (AMMGIAFTWVMAFSCAAPPLFGWS) threads the bilayer. Residues 177-202 (RYMPEGMQCSCGPDYYTHNPDYHNES) lie on the Extracellular side of the membrane. A helical transmembrane segment spans residues 203–230 (YVLYMFVIHFIIPVVVIFFSYGRLICKV). Residues 231 to 252 (REAAAQQQESATTQKAEKEVTR) are Cytoplasmic-facing. Residues 253–276 (MVILMVLGFMLAWTPYAVVAFWIF) traverse the membrane as a helical segment. The Extracellular segment spans residues 277 to 284 (TNKGADFT). The helical transmembrane segment at 285–309 (ATLMAVPAFFSKSSSLYNPIIYVLM) threads the bilayer. Residue Lys296 is modified to N6-(retinylidene)lysine. At 310-355 (NKQFRNCMITTICCGKNPFGDEDVSSTVSQSKTEVSSVSSSQVSPA) the chain is on the cytoplasmic side.

This sequence belongs to the G-protein coupled receptor 1 family. Opsin subfamily. In terms of processing, phosphorylated on some or all of the serine and threonine residues present in the C-terminal region. The color pigments are found in the cone photoreceptor cells.

The protein localises to the membrane. In terms of biological role, visual pigments are the light-absorbing molecules that mediate vision. They consist of an apoprotein, opsin, covalently linked to cis-retinal. This is Green-sensitive opsin (PRA1) from Gallus gallus (Chicken).